The sequence spans 411 residues: Phosphopentomutase (411 aa).

Mn(2+) contacts are provided by Asp-14, Asp-306, His-311, Asp-347, His-348, and His-359.

The protein belongs to the phosphopentomutase family. It depends on Mn(2+) as a cofactor.

The protein resides in the cytoplasm. The enzyme catalyses 2-deoxy-alpha-D-ribose 1-phosphate = 2-deoxy-D-ribose 5-phosphate. It catalyses the reaction alpha-D-ribose 1-phosphate = D-ribose 5-phosphate. It functions in the pathway carbohydrate degradation; 2-deoxy-D-ribose 1-phosphate degradation; D-glyceraldehyde 3-phosphate and acetaldehyde from 2-deoxy-alpha-D-ribose 1-phosphate: step 1/2. In terms of biological role, isomerase that catalyzes the conversion of deoxy-ribose 1-phosphate (dRib-1-P) and ribose 1-phosphate (Rib-1-P) to deoxy-ribose 5-phosphate (dRib-5-P) and ribose 5-phosphate (Rib-5-P), respectively. This chain is Phosphopentomutase, found in Lactococcus lactis subsp. cremoris (strain SK11).